A 457-amino-acid chain; its full sequence is MTKKVYVKTFGCQMNEYDSDKMVDVLGAAEGLVKTDTPEDADVILFNTCSVREKAQEKVFSDLGRVRELKEANPNLIIGVGGCVASQEGASIVARAPYVDLVFGPQTLHRLPQMIDKRRESGRAQVDISFPEIEKFDHLPPARVDGPSAFVSIMEGCSKYCSYCVVPYTRGEEVSRPLDDVLTEIAGLADQGVREVTLLGQNVNAYRAGLTLGSTEIADFAQLIEYVADIPGIERIRYTTSHPKEFTQRLIDTYAKVPKLVSHLHLPVQHGSDRILMAMKRGYTVLEYKSVIRKLRAIRPDLSLSTDLIVGFPGETEEDFDKMMTLVHEMKYDTSFSFIYSPRPGTPAANLHDDTPREVKLRRLQHLQATIEENVQRISDSMVGKIERILVERPARKDPNELAGRTENNRVVNFPAPVASHARLIGQMVDVKIVKAYPHSLRGELVLVHDEAPATTH.

The MTTase N-terminal domain occupies 3-120 (KKVYVKTFGC…LPQMIDKRRE (118 aa)). Residues cysteine 12, cysteine 49, cysteine 83, cysteine 157, cysteine 161, and cysteine 164 each contribute to the [4Fe-4S] cluster site. Positions 143-377 (RVDGPSAFVS…QATIEENVQR (235 aa)) constitute a Radical SAM core domain. The TRAM domain maps to 380 to 447 (DSMVGKIERI…PHSLRGELVL (68 aa)).

Belongs to the methylthiotransferase family. MiaB subfamily. As to quaternary structure, monomer. [4Fe-4S] cluster serves as cofactor.

The protein resides in the cytoplasm. It catalyses the reaction N(6)-dimethylallyladenosine(37) in tRNA + (sulfur carrier)-SH + AH2 + 2 S-adenosyl-L-methionine = 2-methylsulfanyl-N(6)-dimethylallyladenosine(37) in tRNA + (sulfur carrier)-H + 5'-deoxyadenosine + L-methionine + A + S-adenosyl-L-homocysteine + 2 H(+). Catalyzes the methylthiolation of N6-(dimethylallyl)adenosine (i(6)A), leading to the formation of 2-methylthio-N6-(dimethylallyl)adenosine (ms(2)i(6)A) at position 37 in tRNAs that read codons beginning with uridine. This Paraburkholderia xenovorans (strain LB400) protein is tRNA-2-methylthio-N(6)-dimethylallyladenosine synthase.